Reading from the N-terminus, the 552-residue chain is Urocanate hydratase (552 aa).

Residues 49-50, Gln-127, 173-175, Asp-193, 239-240, 260-264, 270-271, and Tyr-319 contribute to the NAD(+) site; these read GG, GMG, NA, QTSAH, and YI. Cys-407 is a catalytic residue. NAD(+) is bound at residue Gly-489.

It belongs to the urocanase family. It depends on NAD(+) as a cofactor.

It is found in the cytoplasm. The enzyme catalyses 4-imidazolone-5-propanoate = trans-urocanate + H2O. The protein operates within amino-acid degradation; L-histidine degradation into L-glutamate; N-formimidoyl-L-glutamate from L-histidine: step 2/3. Its function is as follows. Catalyzes the conversion of urocanate to 4-imidazolone-5-propionate. In Bacillus cereus (strain 03BB102), this protein is Urocanate hydratase.